A 172-amino-acid chain; its full sequence is Orotate phosphoribosyltransferase (172 aa).

5-phospho-alpha-D-ribose 1-diphosphate is bound by residues Arg88, Lys89, Lys92, His94, and 113–121 (EDVTTSGGS). Residues Thr117 and Arg145 each contribute to the orotate site.

This sequence belongs to the purine/pyrimidine phosphoribosyltransferase family. PyrE subfamily. Homodimer. The cofactor is Mg(2+).

The enzyme catalyses orotidine 5'-phosphate + diphosphate = orotate + 5-phospho-alpha-D-ribose 1-diphosphate. It participates in pyrimidine metabolism; UMP biosynthesis via de novo pathway; UMP from orotate: step 1/2. Its function is as follows. Catalyzes the transfer of a ribosyl phosphate group from 5-phosphoribose 1-diphosphate to orotate, leading to the formation of orotidine monophosphate (OMP). This is Orotate phosphoribosyltransferase from Methanospirillum hungatei JF-1 (strain ATCC 27890 / DSM 864 / NBRC 100397 / JF-1).